The primary structure comprises 894 residues: Nitrate reductase [NADPH] (894 aa).

The tract at residues 1-79 (MAVKSQLGVT…PEDLKTPDHR (79 aa)) is disordered. Positions 7-16 (LGVTYTTKTF) are enriched in polar residues. Residues 69–79 (LPEDLKTPDHR) are compositionally biased toward basic and acidic residues. C169 lines the Mo-molybdopterin pocket. A Cytochrome b5 heme-binding domain is found at 535–610 (VRIISLEELK…MPQYHIGTLN (76 aa)). Residues H570 and H593 each coordinate heme. Residues 638–749 (KYWSKAILET…KGPVGKFEYL (112 aa)) form the FAD-binding FR-type domain. Residues 692–695 (RAYT), 709–713 (LIKIY), 723–725 (KMT), S773, and T776 each bind FAD.

This sequence belongs to the nitrate reductase family. As to quaternary structure, homodimer. FAD is required as a cofactor. It depends on heme as a cofactor. The cofactor is Mo-molybdopterin.

The catalysed reaction is nitrite + NADP(+) + H2O = nitrate + NADPH + H(+). Functionally, nitrate reductase is a key enzyme involved in the first step of nitrate assimilation in plants, fungi and bacteria. This is Nitrate reductase [NADPH] (NIA) from Beauveria bassiana (White muscardine disease fungus).